Consider the following 80-residue polypeptide: uncharacterized protein (80 aa).

This is an uncharacterized protein from Haemophilus influenzae (strain ATCC 51907 / DSM 11121 / KW20 / Rd).